The primary structure comprises 456 residues: Histidinol dehydrogenase homolog (456 aa).

Position 279 (His-279) interacts with Zn(2+). Active-site proton acceptor residues include Glu-347 and His-348. His-440 lines the Zn(2+) pocket.

It belongs to the histidinol dehydrogenase family. Zn(2+) is required as a cofactor.

The polypeptide is Histidinol dehydrogenase homolog (Rhizobium meliloti (strain 1021) (Ensifer meliloti)).